The sequence spans 124 residues: Glutaredoxin-2 (124 aa).

A disulfide bridge links cysteine 13 with cysteine 16.

The protein belongs to the glutaredoxin family. In terms of assembly, homodimer.

It localises to the host cytoplasm. Its function is as follows. Glutaredoxin necessary for virion morphogenesis and virus replication. Functions as a thiol-disulfide transfer protein between membrane-associated OPG128 and substrates OPG095 or OPG053. The complete pathway for formation of disulfide bonds in intracellular virion membrane proteins sequentially involves oxidation of OPG072, OPG128 and OPG088. Exhibit thioltransferase and dehydroascorbate reductase activities in vitro. The chain is Glutaredoxin-2 (OPG088) from Camelus.